Consider the following 309-residue polypeptide: Tagatose-6-phosphate kinase (309 aa).

It belongs to the carbohydrate kinase PfkB family. LacC subfamily.

It carries out the reaction D-tagatofuranose 6-phosphate + ATP = D-tagatofuranose 1,6-bisphosphate + ADP + H(+). Its pathway is carbohydrate metabolism; D-tagatose 6-phosphate degradation; D-glyceraldehyde 3-phosphate and glycerone phosphate from D-tagatose 6-phosphate: step 1/2. This Streptococcus pneumoniae serotype 4 (strain ATCC BAA-334 / TIGR4) protein is Tagatose-6-phosphate kinase.